The chain runs to 393 residues: S-adenosylmethionine synthase 1 (393 aa).

Glu-9 provides a ligand contact to Mg(2+). His-15 is an ATP binding site. Glu-43 contributes to the K(+) binding site. L-methionine-binding residues include Glu-56 and Gln-99. ATP contacts are provided by residues 167 to 169 (DGK), 235 to 238 (SGRF), Asp-246, 252 to 253 (RK), Ala-269, Lys-273, and Lys-277. Asp-246 serves as a coordination point for L-methionine. Lys-277 is a binding site for L-methionine.

It belongs to the AdoMet synthase family. Homotetramer. Requires Mn(2+) as cofactor. It depends on Mg(2+) as a cofactor. Co(2+) is required as a cofactor. The cofactor is K(+).

It is found in the cytoplasm. It carries out the reaction L-methionine + ATP + H2O = S-adenosyl-L-methionine + phosphate + diphosphate. Its pathway is amino-acid biosynthesis; S-adenosyl-L-methionine biosynthesis; S-adenosyl-L-methionine from L-methionine: step 1/1. In terms of biological role, catalyzes the formation of S-adenosylmethionine from methionine and ATP. The reaction comprises two steps that are both catalyzed by the same enzyme: formation of S-adenosylmethionine (AdoMet) and triphosphate, and subsequent hydrolysis of the triphosphate. This chain is S-adenosylmethionine synthase 1 (METK1), found in Picea sitchensis (Sitka spruce).